A 271-amino-acid chain; its full sequence is D-methionine-binding lipoprotein MetQ (271 aa).

The first 22 residues, 1 to 22 (MAFKFKTFAAVGALIGSLALVG), serve as a signal peptide directing secretion. Residue cysteine 23 is the site of N-palmitoyl cysteine attachment. Cysteine 23 carries the S-diacylglycerol cysteine lipid modification.

This sequence belongs to the NlpA lipoprotein family.

Its subcellular location is the cell membrane. This protein is a component of a D-methionine permease, a binding protein-dependent, ATP-driven transport system. This Escherichia coli (strain K12) protein is D-methionine-binding lipoprotein MetQ (metQ).